The chain runs to 226 residues: Biosynthetic peptidoglycan transglycosylase (226 aa).

Residues Ile10–Leu30 form a helical membrane-spanning segment.

This sequence belongs to the glycosyltransferase 51 family.

Its subcellular location is the cell inner membrane. It catalyses the reaction [GlcNAc-(1-&gt;4)-Mur2Ac(oyl-L-Ala-gamma-D-Glu-L-Lys-D-Ala-D-Ala)](n)-di-trans,octa-cis-undecaprenyl diphosphate + beta-D-GlcNAc-(1-&gt;4)-Mur2Ac(oyl-L-Ala-gamma-D-Glu-L-Lys-D-Ala-D-Ala)-di-trans,octa-cis-undecaprenyl diphosphate = [GlcNAc-(1-&gt;4)-Mur2Ac(oyl-L-Ala-gamma-D-Glu-L-Lys-D-Ala-D-Ala)](n+1)-di-trans,octa-cis-undecaprenyl diphosphate + di-trans,octa-cis-undecaprenyl diphosphate + H(+). The protein operates within cell wall biogenesis; peptidoglycan biosynthesis. Peptidoglycan polymerase that catalyzes glycan chain elongation from lipid-linked precursors. The polypeptide is Biosynthetic peptidoglycan transglycosylase (Agrobacterium fabrum (strain C58 / ATCC 33970) (Agrobacterium tumefaciens (strain C58))).